A 154-amino-acid polypeptide reads, in one-letter code: Endoribonuclease YbeY (154 aa).

H117, H121, and H127 together coordinate Zn(2+).

This sequence belongs to the endoribonuclease YbeY family. Requires Zn(2+) as cofactor.

It is found in the cytoplasm. Single strand-specific metallo-endoribonuclease involved in late-stage 70S ribosome quality control and in maturation of the 3' terminus of the 16S rRNA. The protein is Endoribonuclease YbeY of Mycoplasma pneumoniae (strain ATCC 29342 / M129 / Subtype 1) (Mycoplasmoides pneumoniae).